The following is a 135-amino-acid chain: Protein PsiE homolog (135 aa).

Helical transmembrane passes span 20–40, 54–74, 82–102, and 107–127; these read VGLIALAAILVVFLIKETFHL, YMLIEGIVIYFLYFEFIALIV, HFPLRYFIYIGITAIIRLIIV, and PIDTLIYSGSILLLVVTLYLA.

It belongs to the PsiE family.

It localises to the cell inner membrane. The polypeptide is Protein PsiE homolog (Yersinia enterocolitica serotype O:8 / biotype 1B (strain NCTC 13174 / 8081)).